The chain runs to 73 residues: Potassium channel toxin alpha-KTx 27.1 (73 aa).

An N-terminal signal peptide occupies residues 1-23; that stretch reads MKFLFLTLFVCCFIAVLVIPSEA.

It belongs to the short scorpion toxin superfamily. Potassium channel inhibitor family. Alpha-KTx 27 subfamily. Post-translationally, contains 4 disulfide bonds. As to expression, expressed by the venom gland.

Its subcellular location is the secreted. The protein is Potassium channel toxin alpha-KTx 27.1 of Buthus israelis (Israeli scorpion).